Here is a 1423-residue protein sequence, read N- to C-terminus: uncharacterized protein (1423 aa).

A signal peptide spans 1 to 28 (MTSSVRLAFLATLLLLLPLEAQIQQANS). The Extracellular segment spans residues 29–1321 (ANVNQNVGQQ…RSREKQNFLT (1293 aa)). N-linked (GlcNAc...) asparagine glycans are attached at residues N94, N306, N355, N483, N666, and N903. The NIDO domain occupies 184–347 (SFFGQSASKA…GRYMFRVDDV (164 aa)). The 181-residue stretch at 638–818 (VKKKSLEMCH…FRCQMFYWRR (181 aa)) folds into the AMOP domain. Residues 1322-1342 (WLAIIGGIFGVLVFVILIFLC) traverse the membrane as a helical segment. Residues 1343 to 1423 (CWIVKQKKKG…EDLHGLKTSV (81 aa)) are Cytoplasmic-facing. The segment at 1364–1401 (SRSSMTGSRGGKKYPIHESEPLNEKRFDADTYRDDDFY) is disordered. Basic and acidic residues predominate over residues 1378–1401 (PIHESEPLNEKRFDADTYRDDDFY).

The protein resides in the membrane. This is an uncharacterized protein from Caenorhabditis elegans.